The sequence spans 219 residues: Ribonuclease HII (219 aa).

Residues 22-219 (GLVAGVDEVG…LLAMRMEAVV (198 aa)) form the RNase H type-2 domain. Positions 28, 29, and 125 each coordinate a divalent metal cation.

Belongs to the RNase HII family. It depends on Mn(2+) as a cofactor. The cofactor is Mg(2+).

It is found in the cytoplasm. It catalyses the reaction Endonucleolytic cleavage to 5'-phosphomonoester.. Functionally, endonuclease that specifically degrades the RNA of RNA-DNA hybrids. The protein is Ribonuclease HII of Granulibacter bethesdensis (strain ATCC BAA-1260 / CGDNIH1).